Here is a 100-residue protein sequence, read N- to C-terminus: Putative septation protein SpoVG (100 aa).

This sequence belongs to the SpoVG family.

Its function is as follows. Could be involved in septation. In Staphylococcus aureus (strain JH1), this protein is Putative septation protein SpoVG.